Here is a 456-residue protein sequence, read N- to C-terminus: Phospholipase A1 member A (456 aa).

The first 24 residues, 1-24 (MCPGLWGTCFWLWGSLLWLSIGRS), serve as a signal peptide directing secretion. Catalysis depends on Ser-166, which acts as the Nucleophile. Residue Asp-190 is the Charge relay system of the active site. A disulfide bridge connects residues Cys-245 and Cys-258. His-260 acts as the Charge relay system in catalysis. 2 disulfide bridges follow: Cys-282–Cys-293 and Cys-296–Cys-304. A glycan (N-linked (GlcNAc...) asparagine) is linked at Asn-365.

The protein belongs to the AB hydrolase superfamily. Lipase family.

Its subcellular location is the secreted. It catalyses the reaction a 1,2-diacyl-sn-glycero-3-phospho-L-serine + H2O = a 2-acyl-sn-glycero-3-phospho-L-serine + a fatty acid + H(+). The enzyme catalyses 1,2-di-(9Z)-octadecenoyl-sn-glycero-3-phospho-L-serine + H2O = 2-(9Z-octadecenoyl)-sn-glycero-3-phospho-L-serine + (9Z)-octadecenoate + H(+). It carries out the reaction 1-hexadecanoyl-2-(5Z,8Z,11Z,14Z-eicosatetraenoyl)-sn-glycero-3-phospho-L-serine + H2O = 2-(5Z,8Z,11Z,14Z)-eicosatetraenoyl-sn-glycero-3-phospho-L-serine + hexadecanoate + H(+). The catalysed reaction is a 1-acyl-sn-glycero-3-phospho-L-serine + H2O = sn-glycero-3-phospho-L-serine + a fatty acid + H(+). It catalyses the reaction 1-(9Z-octadecenoyl)-sn-glycero-3-phospho-L-serine + H2O = sn-glycero-3-phospho-L-serine + (9Z)-octadecenoate + H(+). Hydrolyzes the ester bond of the acyl group attached at the sn-1 position of phosphatidylserines (phospholipase A1 activity) and 1-acyl-2-lysophosphatidylserines (lysophospholipase activity) in the pathway of phosphatidylserines acyl chain remodeling. Cleaves phosphatidylserines exposed on the outer leaflet of the plasma membrane of apoptotic cells producing 2-acyl-1-lysophosphatidylserines, which in turn enhance mast cell activation and histamine production. Has no activity toward other glycerophospholipids including phosphatidylcholines, phosphatidylethanolamines, phosphatidic acids or phosphatidylinositols, or glycerolipids such as triolein. In Rattus norvegicus (Rat), this protein is Phospholipase A1 member A.